Consider the following 215-residue polypeptide: Large ribosomal subunit protein uL3 (215 aa).

Positions 136-155 (GVSISHRSHGSTGQRQDPGK) are disordered. N5-methylglutamine is present on Gln151.

Belongs to the universal ribosomal protein uL3 family. As to quaternary structure, part of the 50S ribosomal subunit. Forms a cluster with proteins L14 and L19. In terms of processing, methylated by PrmB.

Its function is as follows. One of the primary rRNA binding proteins, it binds directly near the 3'-end of the 23S rRNA, where it nucleates assembly of the 50S subunit. The polypeptide is Large ribosomal subunit protein uL3 (Rickettsia felis (strain ATCC VR-1525 / URRWXCal2) (Rickettsia azadi)).